We begin with the raw amino-acid sequence, 414 residues long: Imidazolonepropionase (414 aa).

Fe(3+) is bound by residues His73 and His75. 2 residues coordinate Zn(2+): His73 and His75. 4-imidazolone-5-propanoate contacts are provided by Arg82, Tyr145, and His178. Tyr145 is an N-formimidoyl-L-glutamate binding site. His249 contacts Fe(3+). His249 provides a ligand contact to Zn(2+). 4-imidazolone-5-propanoate is bound at residue Gln252. Fe(3+) is bound at residue Asp324. Asp324 is a binding site for Zn(2+). Residues Asn326 and Gly328 each coordinate N-formimidoyl-L-glutamate. Ser329 contributes to the 4-imidazolone-5-propanoate binding site.

Belongs to the metallo-dependent hydrolases superfamily. HutI family. The cofactor is Zn(2+). Requires Fe(3+) as cofactor.

The protein localises to the cytoplasm. It carries out the reaction 4-imidazolone-5-propanoate + H2O = N-formimidoyl-L-glutamate. Its pathway is amino-acid degradation; L-histidine degradation into L-glutamate; N-formimidoyl-L-glutamate from L-histidine: step 3/3. In terms of biological role, catalyzes the hydrolytic cleavage of the carbon-nitrogen bond in imidazolone-5-propanoate to yield N-formimidoyl-L-glutamate. It is the third step in the universal histidine degradation pathway. In Shewanella denitrificans (strain OS217 / ATCC BAA-1090 / DSM 15013), this protein is Imidazolonepropionase.